The sequence spans 62 residues: Photosystem II reaction center protein Z (62 aa).

The next 2 membrane-spanning stretches (helical) occupy residues 8–28 (LIAAFVALSFAMIIGVPVVFS) and 41–61 (WGGAAAWVVLLFVAALASIVV).

This sequence belongs to the PsbZ family. As to quaternary structure, PSII is composed of 1 copy each of membrane proteins PsbA, PsbB, PsbC, PsbD, PsbE, PsbF, PsbH, PsbI, PsbJ, PsbK, PsbL, PsbM, PsbT, PsbX, PsbY, PsbZ, Psb30/Ycf12, peripheral proteins PsbO, CyanoQ (PsbQ), PsbU, PsbV and a large number of cofactors. It forms dimeric complexes.

It is found in the cellular thylakoid membrane. Functionally, may control the interaction of photosystem II (PSII) cores with the light-harvesting antenna, regulates electron flow through the 2 photosystem reaction centers. PSII is a light-driven water plastoquinone oxidoreductase, using light energy to abstract electrons from H(2)O, generating a proton gradient subsequently used for ATP formation. This Acaryochloris marina (strain MBIC 11017) protein is Photosystem II reaction center protein Z.